The chain runs to 355 residues: Beta-ketoacyl-[acyl-carrier-protein] synthase III (355 aa).

Catalysis depends on residues C122 and H280. An ACP-binding region spans residues 281–285 (QANMR). N311 is an active-site residue.

Belongs to the thiolase-like superfamily. FabH family. Homodimer.

It localises to the cytoplasm. The enzyme catalyses malonyl-[ACP] + acetyl-CoA + H(+) = 3-oxobutanoyl-[ACP] + CO2 + CoA. Its pathway is lipid metabolism; fatty acid biosynthesis. Functionally, catalyzes the condensation reaction of fatty acid synthesis by the addition to an acyl acceptor of two carbons from malonyl-ACP. Catalyzes the first condensation reaction which initiates fatty acid synthesis and may therefore play a role in governing the total rate of fatty acid production. Possesses both acetoacetyl-ACP synthase and acetyl transacylase activities. Its substrate specificity determines the biosynthesis of branched-chain and/or straight-chain of fatty acids. This is Beta-ketoacyl-[acyl-carrier-protein] synthase III from Kocuria rhizophila (strain ATCC 9341 / DSM 348 / NBRC 103217 / DC2201).